Reading from the N-terminus, the 318-residue chain is DNA primase small subunit PriS (318 aa).

Catalysis depends on residues D95, D97, and D224.

Belongs to the eukaryotic-type primase small subunit family. In terms of assembly, heterodimer of a small subunit (PriS) and a large subunit (PriL). Mg(2+) serves as cofactor. The cofactor is Mn(2+).

Its function is as follows. Catalytic subunit of DNA primase, an RNA polymerase that catalyzes the synthesis of short RNA molecules used as primers for DNA polymerase during DNA replication. The small subunit contains the primase catalytic core and has DNA synthesis activity on its own. Binding to the large subunit stabilizes and modulates the activity, increasing the rate of DNA synthesis while decreasing the length of the DNA fragments, and conferring RNA synthesis capability. The DNA polymerase activity may enable DNA primase to also catalyze primer extension after primer synthesis. May also play a role in DNA repair. The chain is DNA primase small subunit PriS from Sulfurisphaera tokodaii (strain DSM 16993 / JCM 10545 / NBRC 100140 / 7) (Sulfolobus tokodaii).